Reading from the N-terminus, the 115-residue chain is ATP synthase subunit g, mitochondrial (115 aa).

Methionine 1 carries the N-acetylmethionine modification. 2 positions are modified to phosphoserine: serine 3 and serine 62.

It belongs to the ATPase g subunit family. As to quaternary structure, F-type ATPases have 2 components, CF(1) - the catalytic core - and CF(0) - the membrane proton channel. In yeast, the dimeric form of ATP synthase consists of 17 polypeptides: alpha, beta, gamma, delta, epsilon, 4 (B), 5 (OSCP), 6 (A), 8, 9 (C), d, E (Tim11), f, g, h, i/j and k. Phosphorylation on Ser-62 impairs ATP synthase dimerization.

The protein localises to the mitochondrion membrane. Mitochondrial membrane ATP synthase (F(1)F(0) ATP synthase or Complex V) produces ATP from ADP in the presence of a proton gradient across the membrane which is generated by electron transport complexes of the respiratory chain. F-type ATPases consist of two structural domains, F(1) - containing the extramembraneous catalytic core, and F(0) - containing the membrane proton channel, linked together by a central stalk and a peripheral stalk. During catalysis, ATP synthesis in the catalytic domain of F(1) is coupled via a rotary mechanism of the central stalk subunits to proton translocation. Part of the complex F(0) domain. Minor subunit located with subunit a in the membrane. This is ATP synthase subunit g, mitochondrial (ATP20) from Saccharomyces cerevisiae (strain ATCC 204508 / S288c) (Baker's yeast).